Consider the following 228-residue polypeptide: Urease accessory protein UreF (228 aa).

Belongs to the UreF family. In terms of assembly, ureD, UreF and UreG form a complex that acts as a GTP-hydrolysis-dependent molecular chaperone, activating the urease apoprotein by helping to assemble the nickel containing metallocenter of UreC. The UreE protein probably delivers the nickel.

It is found in the cytoplasm. Its function is as follows. Required for maturation of urease via the functional incorporation of the urease nickel metallocenter. The chain is Urease accessory protein UreF from Alkalilimnicola ehrlichii (strain ATCC BAA-1101 / DSM 17681 / MLHE-1).